The following is a 185-amino-acid chain: Ribonuclease M5 (185 aa).

The Toprim domain maps to 4-87 (KEIIVVEGKD…AFLPKEEALA (84 aa)). Mg(2+) is bound by residues glutamate 10, aspartate 56, and aspartate 58.

It belongs to the ribonuclease M5 family. Mg(2+) serves as cofactor.

The protein localises to the cytoplasm. The catalysed reaction is Endonucleolytic cleavage of RNA, removing 21 and 42 nucleotides, respectively, from the 5'- and 3'-termini of a 5S-rRNA precursor.. Functionally, required for correct processing of both the 5' and 3' ends of 5S rRNA precursor. Cleaves both sides of a double-stranded region yielding mature 5S rRNA in one step. This chain is Ribonuclease M5, found in Bacillus anthracis.